The chain runs to 299 residues: 4-hydroxy-tetrahydrodipicolinate synthase (299 aa).

A pyruvate-binding site is contributed by Thr-50. The active-site Proton donor/acceptor is Tyr-139. Residue Lys-167 is the Schiff-base intermediate with substrate of the active site. Val-209 provides a ligand contact to pyruvate.

Belongs to the DapA family. Homotetramer; dimer of dimers.

It is found in the cytoplasm. It catalyses the reaction L-aspartate 4-semialdehyde + pyruvate = (2S,4S)-4-hydroxy-2,3,4,5-tetrahydrodipicolinate + H2O + H(+). The protein operates within amino-acid biosynthesis; L-lysine biosynthesis via DAP pathway; (S)-tetrahydrodipicolinate from L-aspartate: step 3/4. Its function is as follows. Catalyzes the condensation of (S)-aspartate-beta-semialdehyde [(S)-ASA] and pyruvate to 4-hydroxy-tetrahydrodipicolinate (HTPA). In Synechococcus elongatus (strain ATCC 33912 / PCC 7942 / FACHB-805) (Anacystis nidulans R2), this protein is 4-hydroxy-tetrahydrodipicolinate synthase.